Reading from the N-terminus, the 881-residue chain is Serine/threonine-protein phosphatase 6 regulatory subunit 1 (881 aa).

Positions 10-403 (SSHLDTLLER…VFNNFLHAQV (394 aa)) are interaction with PPP6C. Ser-232 is modified (phosphoserine). Thr-524 carries the post-translational modification Phosphothreonine. Phosphoserine occurs at positions 529, 530, 531, 635, and 638. 2 stretches are compositionally biased toward acidic residues: residues 621–642 (DDDE…DGED) and 669–686 (DSED…DEEG). Residues 621-881 (DDDEEEEDEE…PEGPASPGSQ (261 aa)) form a disordered region. Residues 700–710 (YPSPGPQPPGP) show a composition bias toward pro residues. 3 positions are modified to phosphoserine: Ser-702, Ser-726, and Ser-759. The segment covering 814–830 (APSSSDSATRDPSTSVP) has biased composition (polar residues). Residue Ser-846 is modified to Phosphoserine.

Belongs to the SAPS family. As to quaternary structure, protein phosphatase 6 (PP6) holoenzyme is proposed to be a heterotrimeric complex formed of the catalytic subunit, a SAPS domain-containing subunit (PP6R) and an ankyrin repeat-domain containing regulatory subunit (ARS). Interacts with PPP6C and NFKBIE. Interacts with ANKRD28, ANKRD44 and ANKRD52. As to expression, ubiquitous with higher expression in testis.

The protein localises to the cytoplasm. Its function is as follows. Regulatory subunit of protein phosphatase 6 (PP6). May function as a scaffolding PP6 subunit. Involved in the PP6-mediated dephosphorylation of NFKBIE opposing its degradation in response to TNF-alpha. The chain is Serine/threonine-protein phosphatase 6 regulatory subunit 1 (PPP6R1) from Homo sapiens (Human).